Consider the following 85-residue polypeptide: Small ribosomal subunit protein uS17 (85 aa).

This sequence belongs to the universal ribosomal protein uS17 family. As to quaternary structure, part of the 30S ribosomal subunit.

In terms of biological role, one of the primary rRNA binding proteins, it binds specifically to the 5'-end of 16S ribosomal RNA. The sequence is that of Small ribosomal subunit protein uS17 from Blochmanniella floridana.